We begin with the raw amino-acid sequence, 394 residues long: MFVEHLELVDFRSYVRADVPMAAGATTFIGSNGQGKTNLVEAVEYLSTLSSHRVSNDTPLVRLGADQAVVRGRVRAGTDDARSLLLEVEINARRANRARINRAPLTRPRDILGVLRTVVFSPNDLAVVRGDPSDRRAFLDGLVVTRWPRMAAVKSDYERVLKQRNALLKSLSGKGRSAGAEIGATMDIWDNELATIGAELLSARLDTLSAVMPLTSAAYREIAPVNDLTTASYKSTIDLEGLWSPPQERESSTPIDRKELANRFLDTLAKRRADELIRGVTLVGPQRDDIILHIGEMPAKGYASHGESWSLALALRLGSFQLLRDDGIEPVLVLDDVFAELDATRRDRLASSVVQADQVLVTAAVASDVPEILRGERFDVGGGQVLAYEGNNDD.

ATP is bound at residue 30–37 (GSNGQGKT).

The protein belongs to the RecF family.

The protein localises to the cytoplasm. Its function is as follows. The RecF protein is involved in DNA metabolism; it is required for DNA replication and normal SOS inducibility. RecF binds preferentially to single-stranded, linear DNA. It also seems to bind ATP. The polypeptide is DNA replication and repair protein RecF (Cutibacterium acnes (strain DSM 16379 / KPA171202) (Propionibacterium acnes)).